A 199-amino-acid chain; its full sequence is Transmembrane protein 9B (199 aa).

The first 34 residues, 1–34, serve as a signal peptide directing secretion; the sequence is MASLWCGNLLRLGSGLSMSCLALSVLLLAQLTGA. Asn-61 carries an N-linked (GlcNAc...) asparagine glycan. The chain crosses the membrane as a helical span at residues 106 to 126; that stretch reads IIIYLSILGLLLLYMVYLTLV. Residues Ser-143 and Ser-190 each carry the phosphoserine modification.

Belongs to the TMEM9 family. In terms of processing, N-glycosylated.

Its subcellular location is the lysosome membrane. The protein resides in the early endosome membrane. Functionally, enhances production of pro-inflammatory cytokines induced by TNF, IL1B, and TLR ligands. Has a role in TNF activation of both the NF-kappaB and MAPK pathways. The protein is Transmembrane protein 9B (Tmem9b) of Mus musculus (Mouse).